Reading from the N-terminus, the 189-residue chain is HTH-type transcriptional regulator Hpr (189 aa).

An HTH marR-type domain is found at 12–156; that stretch reads ALLYSHKIVQ…ISAIVRRLYG (145 aa). A DNA-binding region (H-T-H motif) is located at residues 62–85; that stretch reads ISEIAKYGVMHVSTAFNFSKKLED.

Homodimer.

In terms of biological role, negative regulator of protease production and sporulation. The sequence is that of HTH-type transcriptional regulator Hpr from Exiguobacterium sibiricum (strain DSM 17290 / CCUG 55495 / CIP 109462 / JCM 13490 / 255-15).